We begin with the raw amino-acid sequence, 179 residues long: Large ribosomal subunit protein uL5 (179 aa).

This sequence belongs to the universal ribosomal protein uL5 family. In terms of assembly, part of the 50S ribosomal subunit; part of the 5S rRNA/L5/L18/L25 subcomplex. Contacts the 5S rRNA and the P site tRNA. Forms a bridge to the 30S subunit in the 70S ribosome.

Its function is as follows. This is one of the proteins that bind and probably mediate the attachment of the 5S RNA into the large ribosomal subunit, where it forms part of the central protuberance. In the 70S ribosome it contacts protein S13 of the 30S subunit (bridge B1b), connecting the 2 subunits; this bridge is implicated in subunit movement. Contacts the P site tRNA; the 5S rRNA and some of its associated proteins might help stabilize positioning of ribosome-bound tRNAs. The chain is Large ribosomal subunit protein uL5 from Ectopseudomonas mendocina (strain ymp) (Pseudomonas mendocina).